Here is a 149-residue protein sequence, read N- to C-terminus: SsrA-binding protein (149 aa).

This sequence belongs to the SmpB family.

The protein localises to the cytoplasm. Required for rescue of stalled ribosomes mediated by trans-translation. Binds to transfer-messenger RNA (tmRNA), required for stable association of tmRNA with ribosomes. tmRNA and SmpB together mimic tRNA shape, replacing the anticodon stem-loop with SmpB. tmRNA is encoded by the ssrA gene; the 2 termini fold to resemble tRNA(Ala) and it encodes a 'tag peptide', a short internal open reading frame. During trans-translation Ala-aminoacylated tmRNA acts like a tRNA, entering the A-site of stalled ribosomes, displacing the stalled mRNA. The ribosome then switches to translate the ORF on the tmRNA; the nascent peptide is terminated with the 'tag peptide' encoded by the tmRNA and targeted for degradation. The ribosome is freed to recommence translation, which seems to be the essential function of trans-translation. This is SsrA-binding protein from Wolbachia sp. subsp. Brugia malayi (strain TRS).